The primary structure comprises 531 residues: Probable peptide ABC transporter periplasmic-binding protein y4tO (531 aa).

A signal peptide (tat-type signal) is located at residues 1-32 (MTISRRDLFKAGLAAGAALSVPSLLRAQTAVA).

The protein belongs to the bacterial solute-binding protein 5 family. Post-translationally, predicted to be exported by the Tat system. The position of the signal peptide cleavage has not been experimentally proven.

It localises to the periplasm. Its function is as follows. Probably part of the binding-protein-dependent transport system y4tOPQRS for a peptide. The sequence is that of Probable peptide ABC transporter periplasmic-binding protein y4tO from Sinorhizobium fredii (strain NBRC 101917 / NGR234).